The following is a 297-amino-acid chain: Acetylglutamate kinase (297 aa).

Substrate is bound by residues 70 to 71, R92, and N194; that span reads GG.

The protein belongs to the acetylglutamate kinase family. ArgB subfamily.

Its subcellular location is the cytoplasm. The catalysed reaction is N-acetyl-L-glutamate + ATP = N-acetyl-L-glutamyl 5-phosphate + ADP. It participates in amino-acid biosynthesis; L-arginine biosynthesis; N(2)-acetyl-L-ornithine from L-glutamate: step 2/4. Functionally, catalyzes the ATP-dependent phosphorylation of N-acetyl-L-glutamate. This is Acetylglutamate kinase from Herminiimonas arsenicoxydans.